A 332-amino-acid chain; its full sequence is GDP-mannose transporter 2 (332 aa).

The Cytoplasmic segment spans residues methionine 1 to lysine 12. A helical membrane pass occupies residues tryptophan 13–isoleucine 33. Over threonine 34 to asparagine 47 the chain is Lumenal. A helical transmembrane segment spans residues phenylalanine 48–leucine 68. The Cytoplasmic segment spans residues glycine 69 to tryptophan 84. Residues phenylalanine 85–leucine 105 traverse the membrane as a helical segment. The Lumenal segment spans residues serine 106–proline 108. A helical transmembrane segment spans residues valine 109–phenylalanine 129. Topologically, residues glycine 130 to serine 131 are cytoplasmic. The chain crosses the membrane as a helical span at residues serine 132–alanine 152. Topologically, residues histidine 153 to serine 174 are lumenal. Residue asparagine 170 is glycosylated (N-linked (GlcNAc...) asparagine). Residues phenylalanine 175 to valine 195 form a helical membrane-spanning segment. At leucine 196–aspartate 211 the chain is on the cytoplasmic side. Residues threonine 212–glutamate 232 traverse the membrane as a helical segment. The Lumenal segment spans residues aspartate 233 to leucine 248. N-linked (GlcNAc...) asparagine glycosylation occurs at asparagine 247. A helical membrane pass occupies residues serine 249 to valine 269. The Cytoplasmic segment spans residues arginine 270–serine 274. Residues threonine 275 to phenylalanine 295 traverse the membrane as a helical segment. The Lumenal portion of the chain corresponds to asparagine 296–arginine 300. The helical transmembrane segment at asparagine 301–alanine 321 threads the bilayer. At lysine 322–isoleucine 332 the chain is on the cytoplasmic side.

It belongs to the TPT transporter family. SLC35D subfamily. In terms of assembly, homooligomer.

It is found in the golgi apparatus membrane. Its subcellular location is the cytoplasmic vesicle membrane. The protein localises to the endoplasmic reticulum membrane. Functionally, involved in the import of GDP-mannose from the cytoplasm into the Golgi lumen. The chain is GDP-mannose transporter 2 (VRG4-2) from Vanderwaltozyma polyspora (strain ATCC 22028 / DSM 70294 / BCRC 21397 / CBS 2163 / NBRC 10782 / NRRL Y-8283 / UCD 57-17) (Kluyveromyces polysporus).